The sequence spans 434 residues: Nicotinate phosphoribosyltransferase (434 aa).

His242 is modified (phosphohistidine; by autocatalysis).

The protein belongs to the NAPRTase family. Transiently phosphorylated on a His residue during the reaction cycle. Phosphorylation strongly increases the affinity for substrates and increases the rate of nicotinate D-ribonucleotide production. Dephosphorylation regenerates the low-affinity form of the enzyme, leading to product release.

It carries out the reaction nicotinate + 5-phospho-alpha-D-ribose 1-diphosphate + ATP + H2O = nicotinate beta-D-ribonucleotide + ADP + phosphate + diphosphate. The protein operates within cofactor biosynthesis; NAD(+) biosynthesis; nicotinate D-ribonucleotide from nicotinate: step 1/1. Catalyzes the synthesis of beta-nicotinate D-ribonucleotide from nicotinate and 5-phospho-D-ribose 1-phosphate at the expense of ATP. This Brucella abortus (strain S19) protein is Nicotinate phosphoribosyltransferase.